Consider the following 388-residue polypeptide: 2-Hydroxyacid oxidase (388 aa).

Residues 1 to 21 (MENQFKNNNNSSSIETSNQFS) form a disordered region. The 359-residue stretch at 26–384 (NRLDSFVSVS…NNSIIWDQNK (359 aa)) folds into the FMN hydroxy acid dehydrogenase domain. Residue Y52 coordinates glyoxylate. FMN contacts are provided by residues 105-107 (PWA), S134, 156-158 (QLY), and T184. Position 158 (Y158) interacts with glyoxylate. Position 193 (R193) interacts with glyoxylate. K255 and S277 together coordinate FMN. Glyoxylate is bound by residues H279 and R282. The active-site Proton acceptor is the H279. FMN contacts are provided by residues 310–314 (DGGIR) and 333–334 (GR).

The protein belongs to the FMN-dependent alpha-hydroxy acid dehydrogenase family. In terms of assembly, homotetramer. FMN serves as cofactor.

It catalyses the reaction glycolate + O2 = glyoxylate + H2O2. The enzyme catalyses a (2S)-2-hydroxycarboxylate + O2 = a 2-oxocarboxylate + H2O2. Functionally, catalyzes the oxidation of glycolate to glyoxylate, with a reduction of O2 to H2O2. May use other 2-hydroxyacids as substrates. The chain is 2-Hydroxyacid oxidase (haox) from Dictyostelium discoideum (Social amoeba).